Consider the following 497-residue polypeptide: tRNA (adenine(58)-N(1))-methyltransferase non-catalytic subunit TRM6 (497 aa).

2 disordered regions span residues 1 to 20 (MEGS…DHRI) and 69 to 100 (TSGG…IVDD). Over residues 79-100 (KREEPTAETKEAGTDNRNIVDD) the composition is skewed to basic and acidic residues. 94 to 104 (NRNIVDDGKSQ) is a substrate binding site. Thr-107 carries the phosphothreonine modification. Residues 145 to 154 (KYIKKKKKKY) and 175 to 182 (REPGKINH) contribute to the substrate site. The segment at 276–354 (SSEPKDSALV…EKQRRQEEQR (79 aa)) is disordered. A phosphoserine mark is found at Ser-298 and Ser-305. Basic and acidic residues predominate over residues 327 to 354 (DPEHKGPKERGSKKDYIQEKQRRQEEQR). Substrate is bound by residues Arg-349, Arg-377, 415 to 423 (RERGGVINL), and 434 to 441 (QVLPDRSH). The tract at residues 472 to 497 (SNASTLESHETEEPAAKKRKCPESDS) is disordered. The segment covering 478 to 497 (ESHETEEPAAKKRKCPESDS) has biased composition (basic and acidic residues).

Belongs to the TRM6/GCD10 family. As to quaternary structure, heterotetramer; composed of two copies of TRMT6 and two copies of TRMT61A. Expressed in brain, liver, testis and ovary.

Its subcellular location is the nucleus. In terms of biological role, substrate-binding subunit of tRNA (adenine-N(1)-)-methyltransferase, which catalyzes the formation of N(1)-methyladenine at position 58 (m1A58) in initiator methionyl-tRNA. Together with the TRMT61A catalytic subunit, part of a mRNA N(1)-methyltransferase complex that mediates methylation of adenosine residues at the N(1) position of a small subset of mRNAs: N(1) methylation takes place in tRNA T-loop-like structures of mRNAs and is only present at low stoichiometries. The polypeptide is tRNA (adenine(58)-N(1))-methyltransferase non-catalytic subunit TRM6 (TRMT6) (Homo sapiens (Human)).